Here is a 255-residue protein sequence, read N- to C-terminus: MTIDLNCDLGESFGVWPMGSDAAMIELATSVNIACGFHAGDADTMRKTVDLAGTHGVNIGAHPGYRDLHGFGRRPIAGLTSGEIENLVAYQIGALQAIATMAGHRVTHVKAHGALSNVACEDDMTARAIASAVKAVDPGLVFVVPANSRLVAAGEAAGLPLAHEVFADRAYEDDGSLVSRRKPGAVLHNADEIARRVVTMLQSGEVVSITGKPIRMRMDTVCIHGDTPDAVRIARTLRQALKDNGIAVAPFNLIK.

This sequence belongs to the LamB/PxpA family. As to quaternary structure, forms a complex composed of PxpA, PxpB and PxpC.

The enzyme catalyses 5-oxo-L-proline + ATP + 2 H2O = L-glutamate + ADP + phosphate + H(+). Functionally, catalyzes the cleavage of 5-oxoproline to form L-glutamate coupled to the hydrolysis of ATP to ADP and inorganic phosphate. The polypeptide is 5-oxoprolinase subunit A (Nitrobacter winogradskyi (strain ATCC 25391 / DSM 10237 / CIP 104748 / NCIMB 11846 / Nb-255)).